Consider the following 204-residue polypeptide: UPF0637 protein Lm4b_01081 (204 aa).

The protein belongs to the UPF0637 family.

This Listeria monocytogenes serotype 4b (strain CLIP80459) protein is UPF0637 protein Lm4b_01081.